The chain runs to 180 residues: Large ribosomal subunit protein uL6 (180 aa).

Belongs to the universal ribosomal protein uL6 family. As to quaternary structure, part of the 50S ribosomal subunit.

Functionally, this protein binds to the 23S rRNA, and is important in its secondary structure. It is located near the subunit interface in the base of the L7/L12 stalk, and near the tRNA binding site of the peptidyltransferase center. The chain is Large ribosomal subunit protein uL6 from Borreliella burgdorferi (strain ATCC 35210 / DSM 4680 / CIP 102532 / B31) (Borrelia burgdorferi).